We begin with the raw amino-acid sequence, 880 residues long: Endoglucanase E-4 (880 aa).

The N-terminal stretch at 1-46 (MSVTEPPPRRRGRHSRARRFLTSLGATAALTAGMLGVPLATGTAHA) is a signal peptide. The active-site Nucleophile is the Asp-104. Catalysis depends on residues His-422, His-427, Asp-461, and Glu-470. The CBM3 domain maps to 504–652 (PDGPEIFVEA…GVPVWGTAPE (149 aa)). Residues 647–688 (WGTAPEEGEEPGGGEGPGGGEEPGEDVTPPSAPGSPAVRDVT) are disordered. One can recognise a Fibronectin type-III domain in the interval 678 to 770 (APGSPAVRDV…TVSFTTLAEN (93 aa)). The 110-residue stretch at 771 to 880 (GGGPDASCTV…TLNGEPCALA (110 aa)) folds into the CBM2 domain.

The protein belongs to the glycosyl hydrolase 9 (cellulase E) family.

It catalyses the reaction Endohydrolysis of (1-&gt;4)-beta-D-glucosidic linkages in cellulose, lichenin and cereal beta-D-glucans.. It participates in glycan metabolism; cellulose degradation. This is Endoglucanase E-4 (celD) from Thermobifida fusca (Thermomonospora fusca).